Reading from the N-terminus, the 371-residue chain is Peptide chain release factor 2 (371 aa).

N5-methylglutamine is present on Gln-253.

This sequence belongs to the prokaryotic/mitochondrial release factor family. Methylated by PrmC. Methylation increases the termination efficiency of RF2.

It localises to the cytoplasm. Peptide chain release factor 2 directs the termination of translation in response to the peptide chain termination codons UGA and UAA. This Mycobacterium sp. (strain JLS) protein is Peptide chain release factor 2.